The chain runs to 265 residues: Nitrogenase iron protein 2 (265 aa).

Residue 8–15 (GKGGIGKS) coordinates ATP. Cys-91 contacts [4Fe-4S] cluster. Arg-94 carries the ADP-ribosylarginine; by dinitrogenase reductase ADP-ribosyltransferase modification. Cys-126 contributes to the [4Fe-4S] cluster binding site.

The protein belongs to the NifH/BchL/ChlL family. In terms of assembly, homodimer. It depends on [4Fe-4S] cluster as a cofactor. The reversible ADP-ribosylation of Arg-94 inactivates the nitrogenase reductase and regulates nitrogenase activity.

It carries out the reaction N2 + 8 reduced [2Fe-2S]-[ferredoxin] + 16 ATP + 16 H2O = H2 + 8 oxidized [2Fe-2S]-[ferredoxin] + 2 NH4(+) + 16 ADP + 16 phosphate + 6 H(+). In terms of biological role, the key enzymatic reactions in nitrogen fixation are catalyzed by the nitrogenase complex, which has 2 components: the iron protein and the molybdenum-iron protein. This is Nitrogenase iron protein 2 (nifH2) from Methanothermobacter thermautotrophicus (strain ATCC 29096 / DSM 1053 / JCM 10044 / NBRC 100330 / Delta H) (Methanobacterium thermoautotrophicum).